An 87-amino-acid polypeptide reads, in one-letter code: Keratin-associated protein 7-1 (87 aa).

An 11 X 2 AA repeats of G-[YCGS] region spans residues 43-84 (GCGCNGYSSLGYSFGGSNINNLGGCYGGSFYRPWGSGSGFGY).

It belongs to the KRTAP type 7 family. Interacts with hair keratins. As to expression, expressed in the upper portion of the hair cortex.

Its function is as follows. In the hair cortex, hair keratin intermediate filaments are embedded in an interfilamentous matrix, consisting of hair keratin-associated proteins (KRTAP), which are essential for the formation of a rigid and resistant hair shaft through their extensive disulfide bond cross-linking with abundant cysteine residues of hair keratins. The matrix proteins include the high-sulfur and high-glycine-tyrosine keratins. The protein is Keratin-associated protein 7-1 (KRTAP7-1) of Homo sapiens (Human).